The sequence spans 316 residues: MSFASETKKELTNLDVKDCCTKAELSALIRMNGSLSFSNRKLILDIQTENAAIARRIYTLLKKKYDVTVELLVRKKMRLKKNNVYIVRLVERAKTILEDLKILGEQFVFERNISEELVKKRCCKRSYMRGAFLAGGSVNNPETSSYHLEIFSLYKEHNDALCELMNQFHLNSKTLERKKGYITYMKEAEKITEFLSVVGAHNSLLRFEDVRIVRDMRNSVNRLVNCETANLNKTIGASLRQVENIQFIDEKIGLDALPDKLREIAKLRVDYQEVTLKELGEMVESGKISKSGINHRLRKLDQIAEQLRNGQAVTLK.

A DNA-binding region (H-T-H motif) is located at residues 275 to 309 (TLKELGEMVESGKISKSGINHRLRKLDQIAEQLRN).

It belongs to the WhiA family.

Its function is as follows. Involved in cell division and chromosome segregation. The protein is Probable cell division protein WhiA of Bacillus pumilus (strain SAFR-032).